Consider the following 756-residue polypeptide: Sodium/hydrogen exchanger 8 (756 aa).

At 1–31 (MTSIIGAALPYKSPEKAIASSSYSAENDSSP) the chain is on the extracellular side. A glycan (N-linked (GlcNAc...) asparagine) is linked at Asn-27. Residues 32–52 (VDAVIFAGTSLVLGTACRYLF) traverse the membrane as a helical segment. Over 53–56 (NGTR) the chain is Cytoplasmic. A helical transmembrane segment spans residues 57–77 (VPYTVVLLVIGIFLGSLEYGT). Residues 78–89 (KHNLGKLGHGIR) lie on the Extracellular side of the membrane. The helical transmembrane segment at 90–110 (IWNGINPDLLLAVFLPVLLFE) threads the bilayer. The Cytoplasmic portion of the chain corresponds to 111–125 (SSFSMDVHQIKRCMG). Residues 126–146 (QMVLLAGPGVLISTFCLGALI) traverse the membrane as a helical segment. Topologically, residues 147–157 (KLTFPYNWDWK) are extracellular. The helical transmembrane segment at 158-178 (TSLLLGGLLGATDPVAVVALL) threads the bilayer. At 179-194 (KELGASKKMTTLIDGE) the chain is on the cytoplasmic side. A helical transmembrane segment spans residues 195 to 215 (SLMNDGVSVVVFQLFFKMVMG). Topologically, residues 216–225 (HNSDWGSIIK) are extracellular. Residues 226–248 (FLVQNSFGAVGIGLAFGIASVFW) traverse the membrane as a helical segment. Topologically, residues 249-251 (LKF) are cytoplasmic. The helical transmembrane segment at 252–271 (IFNDTVAQITVTLSASYFAY) threads the bilayer. Residues 272 to 276 (YTAQE) are Extracellular-facing. A helical membrane pass occupies residues 277 to 297 (WAGVSGILTVMILGMFFAAFA). At 298 to 311 (RTAFKGDSHQSLHH) the chain is on the cytoplasmic side. Residues 312–332 (FWEMAAYIANTLVFMLSGVII) traverse the membrane as a helical segment. The Extracellular portion of the chain corresponds to 333 to 350 (AESVLSGQTISYKGNSWS). Residues 351 to 371 (FLFLLYLYVQLSRCVVVGVLY) form a helical membrane-spanning segment. At 372 to 385 (PLLCRSGYGLDWKE) the chain is on the cytoplasmic side. A helical transmembrane segment spans residues 386 to 406 (SIILTWSGLRGAVSLSLALSV). Residues 407 to 422 (KQSSGNSYLSSDTGTR) lie on the Extracellular side of the membrane. The chain crosses the membrane as a helical span at residues 423-443 (FLFLTGGIVFLTLVVNGSTTQ). At 444 to 756 (LLLHLLRMDT…RSLAIGETDA (313 aa)) the chain is on the cytoplasmic side.

This sequence belongs to the monovalent cation:proton antiporter 1 (CPA1) transporter (TC 2.A.36) family.

The protein resides in the cell membrane. It catalyses the reaction Na(+)(in) + H(+)(out) = Na(+)(out) + H(+)(in). The enzyme catalyses K(+)(in) + H(+)(out) = K(+)(out) + H(+)(in). Functionally, may act in low affinity electroneutral exchange of protons for cations such as Na(+) or K(+) across membranes. May also exchange Li(+) and Cs(+) with a lower affinity. The protein is Sodium/hydrogen exchanger 8 (NHX8) of Arabidopsis thaliana (Mouse-ear cress).